Consider the following 377-residue polypeptide: GDP-mannose 3,5-epimerase (377 aa).

An N-acetylglycine modification is found at glycine 2. NAD(+) is bound by residues 34–60 (GAGGFIASHIARRLKHEGHYVIASDWK), aspartate 58, and aspartate 78. Residues glycine 103 and 143–145 (SAC) each bind substrate. The NAD(+) site is built by tyrosine 174 and lysine 178. Tyrosine 174 (proton acceptor) is an active-site residue. Substrate-binding positions include asparagine 203, 216-218 (EKA), lysine 225, 241-243 (QTR), arginine 306, and serine 356. Phosphoserine is present on serine 369.

Belongs to the NAD(P)-dependent epimerase/dehydratase family. Homodimer. Interacts with chaperone Hsc70-3 protein, which may regulate epimerase activity. NAD(+) is required as a cofactor.

It carries out the reaction GDP-alpha-D-mannose = GDP-beta-L-gulose. The enzyme catalyses GDP-beta-L-gulose = GDP-beta-L-galactose. It participates in cofactor biosynthesis; L-ascorbate biosynthesis via GDP-alpha-D-mannose pathway; L-ascorbate from GDP-alpha-D-mannose: step 1/5. With respect to regulation, inhibited by GDP and GDP-D-glucose. Its function is as follows. Catalyzes a reversible epimerization of GDP-D-mannose that precedes the committed step in the biosynthesis of vitamin C (L-ascorbate), resulting in the hydrolysis of the highly energetic glycosyl-pyrophosphoryl linkage. Able to catalyze 2 distinct epimerization reactions and can release both GDP-L-galactose and GDP-L-gulose from GDP-mannose. This is GDP-mannose 3,5-epimerase from Arabidopsis thaliana (Mouse-ear cress).